Here is a 686-residue protein sequence, read N- to C-terminus: Potassium-transporting ATPase ATP-binding subunit 2 (686 aa).

4 consecutive transmembrane segments (helical) span residues 37-57, 64-84, 223-243, and 255-275; these read MFVV…PNLF, MILY…FANF, LLVS…PMAI, and VALT…AIGI. The active-site 4-aspartylphosphate intermediate is D306. ATP contacts are provided by residues D343, E347, 376 to 383, and K395; that span reads FTAQTRMS. Positions 518 and 522 each coordinate Mg(2+). 3 consecutive transmembrane segments (helical) span residues 588–608, 616–636, and 656–676; these read FAII…LNIM, AILS…PLAM, and VYGV…DLVI.

The protein belongs to the cation transport ATPase (P-type) (TC 3.A.3) family. Type IA subfamily. As to quaternary structure, the system is composed of three essential subunits: KdpA, KdpB and KdpC.

The protein resides in the cell membrane. It catalyses the reaction K(+)(out) + ATP + H2O = K(+)(in) + ADP + phosphate + H(+). Part of the high-affinity ATP-driven potassium transport (or Kdp) system, which catalyzes the hydrolysis of ATP coupled with the electrogenic transport of potassium into the cytoplasm. This subunit is responsible for energy coupling to the transport system and for the release of the potassium ions to the cytoplasm. The chain is Potassium-transporting ATPase ATP-binding subunit 2 from Listeria innocua serovar 6a (strain ATCC BAA-680 / CLIP 11262).